Consider the following 141-residue polypeptide: Hemoglobin subunit alpha-D (141 aa).

The Globin domain maps to 1–141 (MLTAEDKKLI…VAAVLAEKYR (141 aa)). Heme b is bound by residues His58 and His87.

As to quaternary structure, heterotetramer of two alpha-D chains and two beta chains. As to expression, red blood cells.

Its function is as follows. Involved in oxygen transport from the lung to the various peripheral tissues. This Aythya fuligula (Tufted duck) protein is Hemoglobin subunit alpha-D (HBAD).